We begin with the raw amino-acid sequence, 80 residues long: Cytochrome c oxidase subunit 7A1, mitochondrial (80 aa).

The N-terminal 21 residues, 1–21, are a transit peptide targeting the mitochondrion; sequence MLAPRVSQALIRSFSSTARNR. Topologically, residues 22–46 are mitochondrial matrix; the sequence is LKNRVPEKQKLFQEDNGIPVYLKGG. Residues 47–75 form a helical membrane-spanning segment; sequence VVDHILYRVTMGLCLGGTAYGVYCLAWAS. The Mitochondrial intermembrane portion of the chain corresponds to 76–80; sequence FPRNK.

It belongs to the cytochrome c oxidase VIIa family. As to quaternary structure, component of the complex IV (CIV, cytochrome c oxidase), a multisubunit enzyme composed of 14 subunits. The complex is composed of a catalytic core of 3 subunits MT-CO1, MT-CO2 and MT-CO3, encoded in the mitochondrial DNA, and 11 supernumerary subunits COX4I1 (or COX4I2), COX5A, COX5B, COX6A2 (or COX6A1), COX6B1 (or COX6B2), COX6C, COX7A1 (or COX7A2), COX7B, COX7C, COX8B and NDUFA4, which are encoded in the nuclear genome. The complex exists as a monomer or a dimer and forms supercomplexes (SCs) in the inner mitochondrial membrane with NADH-ubiquinone oxidoreductase (complex I, CI) and ubiquinol-cytochrome c oxidoreductase (cytochrome b-c1 complex, complex III, CIII), resulting in different assemblies (supercomplex SCI(1)III(2)IV(1) and megacomplex MCI(2)III(2)IV(2)).

Its subcellular location is the mitochondrion inner membrane. The protein operates within energy metabolism; oxidative phosphorylation. Functionally, component of the mitochondrial respiratory complex IV (CIV, also named cytochrome c oxidase complex), the last enzyme in the mitochondrial electron transport chain which drives oxidative phosphorylation. The CIV complex is the component of the respiratory chain that catalyzes the reduction of oxygen to water. Acts as an assembly factor that specifically drives the homodimerization of CIV complexes, mediating the formation of mitochondrial respiratory supercomplexes (respirasomes) containing two CIV: supercomplxes with two molecules of CIV show improved activity. Despite being highly expressed in brown adipose tissue, not required for thermogenesis. This is Cytochrome c oxidase subunit 7A1, mitochondrial (COX7A1) from Saimiri sciureus (Common squirrel monkey).